The following is a 433-amino-acid chain: Acetyl-CoA-benzylalcohol acetyltransferase (433 aa).

Active-site proton acceptor residues include His152 and Asp377.

This sequence belongs to the plant acyltransferase family. Post-translationally, the N-terminus is blocked. In terms of tissue distribution, expressed in petals, style, sepals and stamens. Very low expression in stigma and not detected in leaves.

The enzyme catalyses benzyl alcohol + acetyl-CoA = benzyl acetate + CoA. It catalyses the reaction (E)-cinnamyl alcohol + acetyl-CoA = (E)-cinnamyl acetate + CoA. In terms of biological role, involved in the biosynthesis of benzyl acetate, a major constituent of the floral scent. Can use benzylalcohol, cinnamylalcohol, 3-cis-hexene-1-ol or heptanol as substrates. Has some activity with 2-phenylethanol and 2-naphtalene-ethanol, but no activity with linalool, 2-hydroxybenzylalcohol, 3-hydroxybenzylalcohol or 4-hydroxybenzylalcohol. The protein is Acetyl-CoA-benzylalcohol acetyltransferase (BEAT) of Clarkia breweri (Fairy fans).